The sequence spans 162 residues: ATP synthase subunit b (162 aa).

A helical transmembrane segment spans residues 16 to 36; that stretch reads GISGGTIIYQLLMFIILLALL.

This sequence belongs to the ATPase B chain family. As to quaternary structure, F-type ATPases have 2 components, F(1) - the catalytic core - and F(0) - the membrane proton channel. F(1) has five subunits: alpha(3), beta(3), gamma(1), delta(1), epsilon(1). F(0) has three main subunits: a(1), b(2) and c(10-14). The alpha and beta chains form an alternating ring which encloses part of the gamma chain. F(1) is attached to F(0) by a central stalk formed by the gamma and epsilon chains, while a peripheral stalk is formed by the delta and b chains.

The protein resides in the cell membrane. F(1)F(0) ATP synthase produces ATP from ADP in the presence of a proton or sodium gradient. F-type ATPases consist of two structural domains, F(1) containing the extramembraneous catalytic core and F(0) containing the membrane proton channel, linked together by a central stalk and a peripheral stalk. During catalysis, ATP synthesis in the catalytic domain of F(1) is coupled via a rotary mechanism of the central stalk subunits to proton translocation. In terms of biological role, component of the F(0) channel, it forms part of the peripheral stalk, linking F(1) to F(0). The polypeptide is ATP synthase subunit b (Bacillus caldotenax).